The chain runs to 251 residues: NADPH-dependent oxidoreductase (251 aa).

Belongs to the flavin oxidoreductase frp family. The cofactor is FMN.

In terms of biological role, reduces FMN, organic nitro compounds and disulfide DTNB. Involved in maintenance of the cellular redox state and the disulfide stress response. In Staphylococcus epidermidis (strain ATCC 12228 / FDA PCI 1200), this protein is NADPH-dependent oxidoreductase (nfrA).